The primary structure comprises 169 residues: X polypeptide (169 aa).

Belongs to the IagB/IpgF/P19 family.

In Escherichia coli, this protein is X polypeptide (X).